Here is a 215-residue protein sequence, read N- to C-terminus: FGFR1 oncogene partner 2 homolog (215 aa).

Positions Ala-12 to Ser-186 form a coiled coil. Residues Glu-193 to Ser-215 are disordered.

Belongs to the SIKE family.

The protein resides in the cytoplasm. The sequence is that of FGFR1 oncogene partner 2 homolog (fgfr1op2) from Xenopus laevis (African clawed frog).